A 533-amino-acid polypeptide reads, in one-letter code: Peptide chain release factor 3 (533 aa).

Residues 11–284 (RRRRTFAIIS…ALVGLSPEPL (274 aa)) enclose the tr-type G domain. GTP is bound by residues 20–27 (SHPDAGKT), 92–96 (DTPGH), and 146–149 (NKLD).

The protein belongs to the TRAFAC class translation factor GTPase superfamily. Classic translation factor GTPase family. PrfC subfamily.

It localises to the cytoplasm. Functionally, increases the formation of ribosomal termination complexes and stimulates activities of RF-1 and RF-2. It binds guanine nucleotides and has strong preference for UGA stop codons. It may interact directly with the ribosome. The stimulation of RF-1 and RF-2 is significantly reduced by GTP and GDP, but not by GMP. This chain is Peptide chain release factor 3, found in Ralstonia nicotianae (strain ATCC BAA-1114 / GMI1000) (Ralstonia solanacearum).